Reading from the N-terminus, the 415-residue chain is Corticotropin-releasing factor receptor 1 (415 aa).

Positions 1-23 (MGRRPQLRLVKALLLLGLNSISA) are cleaved as a signal peptide. The Extracellular portion of the chain corresponds to 24–111 (SLQDQHCESL…CQEILSEGEK (88 aa)). 3 disulfides stabilise this stretch: cysteine 30–cysteine 54, cysteine 44–cysteine 87, and cysteine 68–cysteine 102. Asparagine 38, asparagine 45, asparagine 51, asparagine 78, asparagine 90, and asparagine 98 each carry an N-linked (GlcNAc...) asparagine glycan. The segment at 99–108 (HSECQEILSE) is important for peptide agonist binding. The chain crosses the membrane as a helical span at residues 112–142 (SKAHYHIAVIINYLGHCISLAALLVAFVLFL). Over 143–149 (RLRSIRC) the chain is Cytoplasmic. Residues 150–174 (VRNIIHWNLISAFILRNATWFVVQL) form a helical membrane-spanning segment. At 175 to 189 (TMSPEVHQSNVGWCR) the chain is on the extracellular side. Cysteines 188 and 258 form a disulfide. A helical membrane pass occupies residues 190-218 (LVTAAYNYFHVTNFFWMFGEGCYLHTAVV). Residues 219–225 (LTYSTDR) are Cytoplasmic-facing. A helical transmembrane segment spans residues 226 to 253 (LRKWMFICIGWGVPFPIIVAWAIGKLYY). Residues 254-269 (DNEKCWFGKRPGVYTD) are Extracellular-facing. Residues 270-295 (YIYQGPMILVLLINFIFLFNIVRILM) form a helical membrane-spanning segment. Residues 280–290 (LLINFIFLFNI) are important for antagonist binding. The Cytoplasmic portion of the chain corresponds to 296–306 (TKLRASTTSET). Residue serine 301 is modified to Phosphoserine; by PKA. Residues 307-331 (IQYRKAVKATLVLLPLLGITYMLFF) form a helical membrane-spanning segment. Residues 332–338 (VNPGEDE) are Extracellular-facing. The helical transmembrane segment at 339 to 368 (VSRVVFIYFNSFLESFQGFFVSVFYCFLNS) threads the bilayer. Over 369 to 415 (EVRSAIRKRWHRWQDKHSIRARVARAMSIPTSPTRVSFHSIKQSTAV) the chain is Cytoplasmic.

Belongs to the G-protein coupled receptor 2 family. As to quaternary structure, heterodimer; heterodimerizes with GPER1. Interacts (via N-terminal extracellular domain) with CRH and UCN. Interacts with DLG1; this inhibits endocytosis of CRHR1 after agonist binding. Post-translationally, C-terminal Ser or Thr residues may be phosphorylated. In terms of processing, phosphorylation at Ser-301 by PKA prevents maximal coupling to Gq-protein, and thereby negatively regulates downstream signaling.

The protein localises to the cell membrane. The protein resides in the endosome. Its function is as follows. G-protein coupled receptor for CRH (corticotropin-releasing factor) and UCN (urocortin). Has high affinity for CRH and UCN. Ligand binding causes a conformation change that triggers signaling via guanine nucleotide-binding proteins (G proteins) and down-stream effectors, such as adenylate cyclase. Promotes the activation of adenylate cyclase, leading to increased intracellular cAMP levels. Inhibits the activity of the calcium channel CACNA1H. Required for normal embryonic development of the adrenal gland and for normal hormonal responses to stress. Plays a role in the response to anxiogenic stimuli. The polypeptide is Corticotropin-releasing factor receptor 1 (CRHR1) (Ovis aries (Sheep)).